Reading from the N-terminus, the 314-residue chain is Ketimine reductase mu-crystallin (314 aa).

R47 is a 3,3',5-triiodo-L-thyronine binding site. 14 residues coordinate NADPH: D82, H92, R119, A144, V146, Q147, N168, R169, T170, N173, T205, L206, V226, and A228. Position 257 (E257) interacts with 3,3',5-triiodo-L-thyronine. S292 is an NADPH binding site.

This sequence belongs to the ornithine cyclodeaminase/mu-crystallin family. In terms of assembly, homodimer. Binds the thyroid hormone triiodothyronine (T3); T3 binding inhibits enzymatic activity. Expressed in neural tissues, muscle and kidney. Expressed in the inner ear.

It is found in the cytoplasm. The catalysed reaction is L-pipecolate + NADP(+) = Delta(1)-piperideine-2-carboxylate + NADPH + H(+). It carries out the reaction L-pipecolate + NAD(+) = Delta(1)-piperideine-2-carboxylate + NADH + H(+). The enzyme catalyses L-proline + NADP(+) = 1-pyrroline-2-carboxylate + NADPH + H(+). It catalyses the reaction L-proline + NAD(+) = 1-pyrroline-2-carboxylate + NADH + H(+). The catalysed reaction is (3R)-1,4-thiomorpholine-3-carboxylate + NAD(+) = 3,4-dehydrothiomorpholine-3-carboxylate + NADH + 2 H(+). It carries out the reaction (3R)-1,4-thiomorpholine-3-carboxylate + NADP(+) = 3,4-dehydrothiomorpholine-3-carboxylate + NADPH + 2 H(+). The enzyme catalyses (S)-cystathionine ketimine + NADH + 2 H(+) = (3R,5S)-2,3,5,6,7-pentahydro-1,4-thiazepine-3,5-dicarboxylate + NAD(+). It catalyses the reaction (S)-cystathionine ketimine + NADPH + 2 H(+) = (3R,5S)-2,3,5,6,7-pentahydro-1,4-thiazepine-3,5-dicarboxylate + NADP(+). The catalysed reaction is (R)-lanthionine ketimine + NADPH + 2 H(+) = (3R,5R)-1,4-thiomorpholine-3,5-dicarboxylate + NADP(+). It carries out the reaction Delta(2)-thiazoline-2-carboxylate + NADPH + 2 H(+) = L-thiazolidine-2-carboxylate + NADP(+). Its activity is regulated as follows. Inhibited by thyroid hormones triiodothyronine (T3) and thyroxine (T4). Its function is as follows. Catalyzes the NAD(P)H-dependent reduction of imine double bonds of a number of cyclic ketimine substrates, including sulfur-containing cyclic ketimines. Under physiological conditions, it efficiently catalyzes delta(1)-piperideine-2-carboxylate (P2C) and delta(1)-pyrroline-2-carboxylate (Pyr2C) reduction, suggesting a central role in lysine and glutamate metabolism. Additional substrates are delta(2)-thiazoline-2-carboxylate (T2C), 3,4-dehydrothiomorpholine-3-carboxylate (AECK), and (R)-lanthionine ketimine (LK) that is reduced at very low rate compared to other substrates. Also catalyzes the NAD(P)H-dependent reduction of (S)-cystathionine ketimine (CysK). This chain is Ketimine reductase mu-crystallin, found in Homo sapiens (Human).